A 417-amino-acid polypeptide reads, in one-letter code: Gamma-glutamyl phosphate reductase (417 aa).

It belongs to the gamma-glutamyl phosphate reductase family.

The protein resides in the cytoplasm. The enzyme catalyses L-glutamate 5-semialdehyde + phosphate + NADP(+) = L-glutamyl 5-phosphate + NADPH + H(+). Its pathway is amino-acid biosynthesis; L-proline biosynthesis; L-glutamate 5-semialdehyde from L-glutamate: step 2/2. Catalyzes the NADPH-dependent reduction of L-glutamate 5-phosphate into L-glutamate 5-semialdehyde and phosphate. The product spontaneously undergoes cyclization to form 1-pyrroline-5-carboxylate. This is Gamma-glutamyl phosphate reductase from Haemophilus influenzae (strain ATCC 51907 / DSM 11121 / KW20 / Rd).